The following is a 469-amino-acid chain: UDP-N-acetylmuramate--L-alanine ligase (469 aa).

Position 113-119 (113-119 (GTHGKTT)) interacts with ATP.

This sequence belongs to the MurCDEF family.

It is found in the cytoplasm. It carries out the reaction UDP-N-acetyl-alpha-D-muramate + L-alanine + ATP = UDP-N-acetyl-alpha-D-muramoyl-L-alanine + ADP + phosphate + H(+). It functions in the pathway cell wall biogenesis; peptidoglycan biosynthesis. In terms of biological role, cell wall formation. The chain is UDP-N-acetylmuramate--L-alanine ligase from Neisseria meningitidis serogroup C / serotype 2a (strain ATCC 700532 / DSM 15464 / FAM18).